Here is a 435-residue protein sequence, read N- to C-terminus: Tol-Pal system protein TolB (435 aa).

The N-terminal stretch at M1–A26 is a signal peptide.

It belongs to the TolB family. In terms of assembly, the Tol-Pal system is composed of five core proteins: the inner membrane proteins TolA, TolQ and TolR, the periplasmic protein TolB and the outer membrane protein Pal. They form a network linking the inner and outer membranes and the peptidoglycan layer.

It is found in the periplasm. Its function is as follows. Part of the Tol-Pal system, which plays a role in outer membrane invagination during cell division and is important for maintaining outer membrane integrity. The sequence is that of Tol-Pal system protein TolB from Allorhizobium ampelinum (strain ATCC BAA-846 / DSM 112012 / S4) (Agrobacterium vitis (strain S4)).